The chain runs to 617 residues: Formin-binding protein 1 (617 aa).

Residues 1–79 are required for self-association and induction of membrane tubulation; the sequence is MSWGTELWDQ…CKAFISNLNE (79 aa). Residues 1–264 enclose the F-BAR domain; that stretch reads MSWGTELWDQ…AAESIDQKND (264 aa). The tract at residues 1 to 335 is interaction with microtubules; it reads MSWGTELWDQ…KKNKLMSLLT (335 aa). An N6-acetyllysine mark is found at Lys-66 and Lys-110. Residues 67–259 adopt a coiled-coil conformation; sequence YTSCKAFISN…DGIVKAAESI (193 aa). Residues 251–617 are required for self-association and induction of membrane tubulation; sequence GIVKAAESID…VCLDKNAKDS (367 aa). 2 disordered regions span residues 280–315 and 333–366; these read GDIE…KFGG and LLTS…QKEP. Residues Ser-296 and Ser-299 each carry the phosphoserine modification. Over residues 338–347 the composition is skewed to pro residues; it reads HQPPPPPPAS. Phosphoserine occurs at positions 349 and 359. Residues 398–490 adopt a coiled-coil conformation; that stretch reads TPEDFSNLPP…EVEGRLPARS (93 aa). The segment at 400-552 is interaction with RND2; the sequence is EDFSNLPPEQ…FDDEEPLPAI (153 aa). Residues 404-481 form the REM-1 domain; that stretch reads NLPPEQRRKK…TQKFEAWLAE (78 aa). The interval 486–531 is disordered; the sequence is LPARSEQARRQSGLYDSQNPPTVNNCAQDRESPDGSYTEEQSQESE. The interval 495-617 is interaction with PDE6G; sequence RQSGLYDSQN…VCLDKNAKDS (123 aa). Position 497 is a phosphoserine (Ser-497). The segment covering 499 to 512 has biased composition (polar residues); that stretch reads LYDSQNPPTVNNCA. Tyr-500 carries the phosphotyrosine modification. The tract at residues 514–617 is required for interaction with TNKS; it reads DRESPDGSYT…VCLDKNAKDS (104 aa). Position 521 is a phosphoserine (Ser-521). Residues 535–617 are interaction with DNM1 and DNM3; sequence LATDFDDEFD…VCLDKNAKDS (83 aa). Residues 550-611 enclose the SH3 domain; sequence PAIGTCKALY…PTSYVEVCLD (62 aa). An interaction with ARHGAP17, DAAM1, DIAPH1 and DIAPH2 region spans residues 550–617; that stretch reads PAIGTCKALY…VCLDKNAKDS (68 aa). Residues 553–609 are interaction with DNM2 and WASL; sequence GTCKALYTFEGQNEGTISVVEGETLYVIEEDKGDGWTRIRRNEDEEGYVPTSYVEVC. Residues 553–610 form an interaction with FASLG region; the sequence is GTCKALYTFEGQNEGTISVVEGETLYVIEEDKGDGWTRIRRNEDEEGYVPTSYVEVCL.

The protein belongs to the FNBP1 family. As to quaternary structure, interacts specifically with GTP-bound RND2 and CDC42. Interacts with PDE6G and microtubules. Homodimerizes, the dimers can polymerize end-to-end to form filamentous structures. Interacts with AKAP9, ARHGAP17, DAAM1, DIAPH1, DIAPH2, DNM1, DNM2, DNM3, FASLG/FASL, SNX2 and WASL/N-WASP. May interact with TNKS. As to expression, very highly expressed in the epithelial cells of the gastrointestinal tract, respiratory, reproductive and urinary systems. Also highly expressed in brown adipose tissue, cardiomyocytes, enteric ganglia and glucagon producing cells of the pancreas. Expressed in germ cells of the testis and all regions of the brain.

It localises to the cytoplasm. The protein resides in the cytoskeleton. Its subcellular location is the cell cortex. It is found in the lysosome. The protein localises to the cytoplasmic vesicle. It localises to the cell membrane. The protein resides in the membrane. Its subcellular location is the clathrin-coated pit. Its function is as follows. May act as a link between RND2 signaling and regulation of the actin cytoskeleton. Required to coordinate membrane tubulation with reorganization of the actin cytoskeleton during the late stage of clathrin-mediated endocytosis. Binds to lipids such as phosphatidylinositol 4,5-bisphosphate and phosphatidylserine and promotes membrane invagination and the formation of tubules. Also enhances actin polymerization via the recruitment of WASL/N-WASP, which in turn activates the Arp2/3 complex. Actin polymerization may promote the fission of membrane tubules to form endocytic vesicles. May be required for the lysosomal retention of FASLG/FASL. This chain is Formin-binding protein 1 (FNBP1), found in Homo sapiens (Human).